The primary structure comprises 348 residues: Ricin B-like lectin R40C1 (348 aa).

The interval M1 to A26 is disordered. Positions T199 to I345 constitute a Ricin B-type lectin domain.

In terms of tissue distribution, expressed in roots and shoots.

In terms of biological role, lectin which binds carbohydrates in vitro. Interacts through its lectin domain with glycan structures containing specific motifs. The polypeptide is Ricin B-like lectin R40C1 (Oryza sativa subsp. japonica (Rice)).